We begin with the raw amino-acid sequence, 195 residues long: Imidazoleglycerol-phosphate dehydratase (195 aa).

This sequence belongs to the imidazoleglycerol-phosphate dehydratase family.

The protein localises to the cytoplasm. It carries out the reaction D-erythro-1-(imidazol-4-yl)glycerol 3-phosphate = 3-(imidazol-4-yl)-2-oxopropyl phosphate + H2O. It functions in the pathway amino-acid biosynthesis; L-histidine biosynthesis; L-histidine from 5-phospho-alpha-D-ribose 1-diphosphate: step 6/9. The polypeptide is Imidazoleglycerol-phosphate dehydratase (Paraburkholderia phytofirmans (strain DSM 17436 / LMG 22146 / PsJN) (Burkholderia phytofirmans)).